A 112-amino-acid chain; its full sequence is Putative inner membrane protein YafU (112 aa).

Topologically, residues 1–21 are cytoplasmic; that stretch reads MSSERDLVNFLGDFSMDVAKA. A helical membrane pass occupies residues 22–42; sequence VIAGGVATAIGSLASFACVSF. Residue Gly-43 is a topological domain, periplasmic. The helical transmembrane segment at 44–64 threads the bilayer; it reads FPVILVGGAILLTGIVCTVVL. Residues 65-112 lie on the Cytoplasmic side of the membrane; sequence NEIDAQCHLSEKLKYAIRDGLKRQQELDKWKRENMTPFMYVLNTPPVI.

The protein resides in the cell inner membrane. This Escherichia coli (strain K12) protein is Putative inner membrane protein YafU (yafU).